Here is a 644-residue protein sequence, read N- to C-terminus: Biosynthetic arginine decarboxylase (644 aa).

An N6-(pyridoxal phosphate)lysine modification is found at K100. 282–292 (CDVGGGLAIDY) lines the substrate pocket.

Belongs to the Orn/Lys/Arg decarboxylase class-II family. SpeA subfamily. Mg(2+) is required as a cofactor. It depends on pyridoxal 5'-phosphate as a cofactor.

It carries out the reaction L-arginine + H(+) = agmatine + CO2. Catalyzes the biosynthesis of agmatine from arginine. The protein is Biosynthetic arginine decarboxylase of Gloeobacter violaceus (strain ATCC 29082 / PCC 7421).